The following is an 85-amino-acid chain: Augerpeptide-s6a (85 aa).

Positions 1-20 (MTLTMSTVVFFSLILLTLGL) are cleaved as a signal peptide. Positions 21 to 43 (QPKDKDEGVMGRSRLGKRGLLMR) are excised as a propeptide. Cystine bridges form between Cys-54–Cys-65, Cys-58–Cys-70, and Cys-64–Cys-81.

As to expression, expressed by the venom duct.

It is found in the secreted. This is Augerpeptide-s6a from Terebra subulata (Chocolate spotted auger).